The chain runs to 224 residues: MQKLLLIAATSATILSSSLSFAEGMDNEWYLRIDTGAAMFNEEKDKATGVKLKSNTTVPVDLGIGYYISENCRADLTLGTIIGGKLKKSGAATNAPFTGTNVSASHKPTITRLLINGYVDLTNFDMFDVFAGAGVGPALVKEKITYNGITGLSSNTKNRTNISYKLTLGTSAQIADGVKVELAYSWIDDGRTKSKNVIYPGTSVPTGGMRYQSHNLTAGIRFDI.

Residues 1-22 (MQKLLLIAATSATILSSSLSFA) form the signal peptide.

The protein is Putative adhesin RMA_1308 of Rickettsia massiliae (strain Mtu5).